The following is a 368-amino-acid chain: Flavanone 3-dioxygenase (368 aa).

The Fe2OG dioxygenase domain maps to 191–295 (CVDMDQKVIV…RMSIATFQNP (105 aa)). His218, Asp220, and His276 together coordinate Fe cation. Arg286 contacts 2-oxoglutarate.

This sequence belongs to the iron/ascorbate-dependent oxidoreductase family. Fe(2+) serves as cofactor. Requires L-ascorbate as cofactor.

It carries out the reaction a (2S)-flavan-4-one + 2-oxoglutarate + O2 = a (2R,3R)-dihydroflavonol + succinate + CO2. The protein operates within secondary metabolite biosynthesis; flavonoid biosynthesis. Involved in the conversion of (2S)-naringenin to (+)-(2R/3R)-dihydrokaempferol. The sequence is that of Flavanone 3-dioxygenase (FHT) from Petroselinum crispum (Parsley).